We begin with the raw amino-acid sequence, 250 residues long: Peptidyl-tRNA hydrolase (250 aa).

Tyr-14 is a tRNA binding site. His-19 functions as the Proton acceptor in the catalytic mechanism. Phe-64, Asn-66, and Asn-112 together coordinate tRNA. Residues 192–250 form a disordered region; the sequence is MGDGNQRPGGVKTDPAQLEKAPPKAQSHIRQARQNQKKPNIPESGPMAEMLKKLLGKKD. Residues 219–229 show a composition bias toward polar residues; sequence HIRQARQNQKK. A compositionally biased stretch (basic and acidic residues) spans 241 to 250; sequence MLKKLLGKKD.

This sequence belongs to the PTH family. Monomer.

The protein resides in the cytoplasm. It carries out the reaction an N-acyl-L-alpha-aminoacyl-tRNA + H2O = an N-acyl-L-amino acid + a tRNA + H(+). Its function is as follows. Hydrolyzes ribosome-free peptidyl-tRNAs (with 1 or more amino acids incorporated), which drop off the ribosome during protein synthesis, or as a result of ribosome stalling. In terms of biological role, catalyzes the release of premature peptidyl moieties from peptidyl-tRNA molecules trapped in stalled 50S ribosomal subunits, and thus maintains levels of free tRNAs and 50S ribosomes. The polypeptide is Peptidyl-tRNA hydrolase (Brucella suis (strain ATCC 23445 / NCTC 10510)).